Here is a 423-residue protein sequence, read N- to C-terminus: Polyglutamylase complex subunit TTLL1 (423 aa).

One can recognise a TTL domain in the interval 1–367; that stretch reads MAGKVKWVTD…NGEIPDCKWN (367 aa). ATP-binding positions include Lys-138, 144–145, 181–184, and 194–196; these read QG, SLYI, and KFD. Gln-144 lines the a protein pocket. Residue Arg-220 coordinates L-glutamate. 241 to 242 is a binding site for ATP; it reads TN. Lys-259 contacts L-glutamate. Positions 313, 326, and 328 each coordinate Mg(2+). Position 344 (Lys-344) interacts with L-glutamate. A disordered region spans residues 391 to 423; that stretch reads GAERELRSRPGQSLGPKGSRLRDAGRTVLTTWK.

It belongs to the tubulin polyglutamylase family. In terms of assembly, part of the neuronal tubulin polyglutamylase complex which contains TPGS1, TPGS2, TTLL1, LRRC49 and NICN1. Interacts with PCM1, CSTPP1 and LRRC49. It depends on Mg(2+) as a cofactor.

It localises to the cytoplasm. It is found in the cytoskeleton. The protein localises to the cilium basal body. The protein resides in the cilium axoneme. Its subcellular location is the cell projection. It localises to the cilium. It is found in the flagellum. It carries out the reaction (L-glutamyl)(n)-gamma-L-glutamyl-L-glutamyl-[protein] + L-glutamate + ATP = (L-glutamyl)(n+1)-gamma-L-glutamyl-L-glutamyl-[protein] + ADP + phosphate + H(+). Catalytic subunit of a polyglutamylase complex which modifies tubulin, generating side chains of glutamate on the gamma-carboxyl group of specific glutamate residues within the C-terminal tail of tubulin. Probably involved in the side-chain elongation step of the polyglutamylation reaction rather than the initiation step. Modifies both alpha- and beta-tubulins with a preference for the alpha-tail. Unlike most polyglutamylases of the tubulin--tyrosine ligase family, only displays a catalytic activity when in complex with other proteins as it is most likely lacking domains important for autonomous activity. Part of the neuronal tubulin polyglutamylase complex. Mediates cilia and flagella polyglutamylation which is essential for their biogenesis and motility. Involved in respiratory motile cilia function through the regulation of beating asymmetry. Essential for sperm flagella biogenesis, motility and male fertility. Involved in KLF4 glutamylation which impedes its ubiquitination, thereby leading to somatic cell reprogramming, pluripotency maintenance and embryogenesis. This Bos taurus (Bovine) protein is Polyglutamylase complex subunit TTLL1 (TTLL1).